A 502-amino-acid polypeptide reads, in one-letter code: Cobyric acid synthase (502 aa).

Residues 260–433 (ILRVAVCAIP…WHGSLESDGF (174 aa)) enclose the GATase cobBQ-type domain. C341 functions as the Nucleophile in the catalytic mechanism. Residue H425 is part of the active site.

Belongs to the CobB/CobQ family. CobQ subfamily.

Its pathway is cofactor biosynthesis; adenosylcobalamin biosynthesis. Catalyzes amidations at positions B, D, E, and G on adenosylcobyrinic A,C-diamide. NH(2) groups are provided by glutamine, and one molecule of ATP is hydrogenolyzed for each amidation. This is Cobyric acid synthase from Streptomyces avermitilis (strain ATCC 31267 / DSM 46492 / JCM 5070 / NBRC 14893 / NCIMB 12804 / NRRL 8165 / MA-4680).